A 216-amino-acid chain; its full sequence is Ribonuclease HII (216 aa).

Residues 33 to 216 (WPVAGADEAG…RMSFRPFRQL (184 aa)) enclose the RNase H type-2 domain. The a divalent metal cation site is built by D39, E40, and D130.

Belongs to the RNase HII family. Mn(2+) serves as cofactor. Requires Mg(2+) as cofactor.

It localises to the cytoplasm. It carries out the reaction Endonucleolytic cleavage to 5'-phosphomonoester.. In terms of biological role, endonuclease that specifically degrades the RNA of RNA-DNA hybrids. The sequence is that of Ribonuclease HII from Sinorhizobium medicae (strain WSM419) (Ensifer medicae).